A 227-amino-acid polypeptide reads, in one-letter code: Cytochrome c oxidase subunit 2 (227 aa).

Topologically, residues 1–14 (MAYPFQLGLQDATS) are mitochondrial intermembrane. The helical transmembrane segment at 15 to 45 (PIMEELLHFHDHTLMIVFLISSLVLYIISLM) threads the bilayer. The Mitochondrial matrix segment spans residues 46–59 (LTTKLTHTSTMDAQ). The chain crosses the membrane as a helical span at residues 60–87 (EVETVWTILPAIILILIALPSLRILYMM). At 88–227 (DEINNPSLTV…YFETWSAVMV (140 aa)) the chain is on the mitochondrial intermembrane side. His-161, Cys-196, Glu-198, Cys-200, His-204, and Met-207 together coordinate Cu cation. A Mg(2+)-binding site is contributed by Glu-198. Tyr-218 carries the phosphotyrosine modification.

It belongs to the cytochrome c oxidase subunit 2 family. As to quaternary structure, component of the cytochrome c oxidase (complex IV, CIV), a multisubunit enzyme composed of 14 subunits. The complex is composed of a catalytic core of 3 subunits MT-CO1, MT-CO2 and MT-CO3, encoded in the mitochondrial DNA, and 11 supernumerary subunits COX4I, COX5A, COX5B, COX6A, COX6B, COX6C, COX7A, COX7B, COX7C, COX8 and NDUFA4, which are encoded in the nuclear genome. The complex exists as a monomer or a dimer and forms supercomplexes (SCs) in the inner mitochondrial membrane with NADH-ubiquinone oxidoreductase (complex I, CI) and ubiquinol-cytochrome c oxidoreductase (cytochrome b-c1 complex, complex III, CIII), resulting in different assemblies (supercomplex SCI(1)III(2)IV(1) and megacomplex MCI(2)III(2)IV(2)). Found in a complex with TMEM177, COA6, COX18, COX20, SCO1 and SCO2. Interacts with TMEM177 in a COX20-dependent manner. Interacts with COX20. Interacts with COX16. The cofactor is Cu cation.

The protein localises to the mitochondrion inner membrane. It carries out the reaction 4 Fe(II)-[cytochrome c] + O2 + 8 H(+)(in) = 4 Fe(III)-[cytochrome c] + 2 H2O + 4 H(+)(out). In terms of biological role, component of the cytochrome c oxidase, the last enzyme in the mitochondrial electron transport chain which drives oxidative phosphorylation. The respiratory chain contains 3 multisubunit complexes succinate dehydrogenase (complex II, CII), ubiquinol-cytochrome c oxidoreductase (cytochrome b-c1 complex, complex III, CIII) and cytochrome c oxidase (complex IV, CIV), that cooperate to transfer electrons derived from NADH and succinate to molecular oxygen, creating an electrochemical gradient over the inner membrane that drives transmembrane transport and the ATP synthase. Cytochrome c oxidase is the component of the respiratory chain that catalyzes the reduction of oxygen to water. Electrons originating from reduced cytochrome c in the intermembrane space (IMS) are transferred via the dinuclear copper A center (CU(A)) of subunit 2 and heme A of subunit 1 to the active site in subunit 1, a binuclear center (BNC) formed by heme A3 and copper B (CU(B)). The BNC reduces molecular oxygen to 2 water molecules using 4 electrons from cytochrome c in the IMS and 4 protons from the mitochondrial matrix. The sequence is that of Cytochrome c oxidase subunit 2 (MT-CO2) from Lycalopex vetulus (Hoary fox).